Consider the following 281-residue polypeptide: NADPH-dependent 7-cyano-7-deazaguanine reductase (281 aa).

88 to 90 is a substrate binding site; the sequence is IES. 90 to 91 contributes to the NADPH binding site; the sequence is SK. The active-site Thioimide intermediate is the C189. The Proton donor role is filled by D196. 228 to 229 provides a ligand contact to substrate; it reads HE. NADPH is bound at residue 257 to 258; that stretch reads RG.

Belongs to the GTP cyclohydrolase I family. QueF type 2 subfamily. As to quaternary structure, homodimer.

Its subcellular location is the cytoplasm. The catalysed reaction is 7-aminomethyl-7-carbaguanine + 2 NADP(+) = 7-cyano-7-deazaguanine + 2 NADPH + 3 H(+). It participates in tRNA modification; tRNA-queuosine biosynthesis. In terms of biological role, catalyzes the NADPH-dependent reduction of 7-cyano-7-deazaguanine (preQ0) to 7-aminomethyl-7-deazaguanine (preQ1). The protein is NADPH-dependent 7-cyano-7-deazaguanine reductase of Yersinia enterocolitica serotype O:8 / biotype 1B (strain NCTC 13174 / 8081).